The chain runs to 454 residues: Keratin, type I cuticular Ha5 (454 aa).

The head stretch occupies residues 1–97; it reads MASKCLKASF…FGEGILTGNE (97 aa). The 311-residue stretch at 97–407 folds into the IF rod domain; the sequence is EKETMQFLND…GLLDSEDCKL (311 aa). The tract at residues 98–125 is coil 1A; it reads KETMQFLNDRLASYLEKCGSWSGRTRSW. Residues 134–142 form a linker 1 region; that stretch reads SNSALPVPD. A coil 1B region spans residues 143 to 243; that stretch reads YQSYFQTIEE…HEEEVNSLRC (101 aa). Residues 244 to 259 are linker 12; sequence QLGDRLNVEVDAAPPV. Positions 260 to 403 are coil 2; it reads DLNRVLNEMR…NTYRGLLDSE (144 aa). A tail region spans residues 404 to 454; it reads DCKLPCNPCAPDHSPSKSCLPCLPAASCGPGMARTTCSPRPICVPCPGSRF.

It belongs to the intermediate filament family.

This Bos taurus (Bovine) protein is Keratin, type I cuticular Ha5.